Here is a 193-residue protein sequence, read N- to C-terminus: MAQASLLACEGLAGVSLVPTAASKKMMLSQIASKQAENGERAGSPDVLRCSSQGHRKDSDKSRSRKDDDSLSEASHSKKTVKKVVVVEQNGSFQVKIPKNFVCEHCFGAFRSSYHLKRHILIHTGEKPFECDICDMRFIQKYHLERHKRVHSGEKPYQCERCHQCFSRTDRLLRHKRMCQGCQSKTSDGQFSL.

The interval 33–75 is disordered; the sequence is SKQAENGERAGSPDVLRCSSQGHRKDSDKSRSRKDDDSLSEAS. A Glycyl lysine isopeptide (Lys-Gly) (interchain with G-Cter in SUMO2) cross-link involves residue K34. S44 bears the Phosphoserine mark. Residues 55–69 are compositionally biased toward basic and acidic residues; the sequence is HRKDSDKSRSRKDDD. C2H2-type zinc fingers lie at residues 101–123 and 129–151; these read FVCE…ILIH and FECD…KRVH. A C2H2-type 3; atypical zinc finger spans residues 157–179; the sequence is YQCERCHQCFSRTDRLLRHKRMC.

Belongs to the krueppel C2H2-type zinc-finger protein family.

It is found in the nucleus. In terms of biological role, may be involved in transcriptional regulation. This is Zinc finger protein 740 (ZNF740) from Homo sapiens (Human).